We begin with the raw amino-acid sequence, 305 residues long: tRNA dimethylallyltransferase (305 aa).

8–15 contributes to the ATP binding site; that stretch reads GPTAIGKS. Substrate is bound at residue 10–15; it reads TAIGKS. Residues 33–36 are interaction with substrate tRNA; it reads DSMA.

This sequence belongs to the IPP transferase family. Monomer. It depends on Mg(2+) as a cofactor.

It catalyses the reaction adenosine(37) in tRNA + dimethylallyl diphosphate = N(6)-dimethylallyladenosine(37) in tRNA + diphosphate. Its function is as follows. Catalyzes the transfer of a dimethylallyl group onto the adenine at position 37 in tRNAs that read codons beginning with uridine, leading to the formation of N6-(dimethylallyl)adenosine (i(6)A). This is tRNA dimethylallyltransferase from Aquifex aeolicus (strain VF5).